The following is a 284-amino-acid chain: Shikimate dehydrogenase (NADP(+)) (284 aa).

Shikimate is bound by residues 20–22 and Ser-67; that span reads SIS. Lys-71 acts as the Proton acceptor in catalysis. Asp-83 lines the NADP(+) pocket. Residues Asn-92 and Asp-107 each contribute to the shikimate site. Residues 129-133 and Ile-227 each bind NADP(+); that span reads GAGGA. Shikimate is bound at residue Tyr-229. Gly-250 contributes to the NADP(+) binding site.

It belongs to the shikimate dehydrogenase family. In terms of assembly, homodimer.

The enzyme catalyses shikimate + NADP(+) = 3-dehydroshikimate + NADPH + H(+). The protein operates within metabolic intermediate biosynthesis; chorismate biosynthesis; chorismate from D-erythrose 4-phosphate and phosphoenolpyruvate: step 4/7. In terms of biological role, involved in the biosynthesis of the chorismate, which leads to the biosynthesis of aromatic amino acids. Catalyzes the reversible NADPH linked reduction of 3-dehydroshikimate (DHSA) to yield shikimate (SA). This is Shikimate dehydrogenase (NADP(+)) from Streptococcus pneumoniae (strain Taiwan19F-14).